The sequence spans 360 residues: 3-isopropylmalate dehydrogenase (360 aa).

Position 76-89 (76-89 (GPKWDKIERDIRPE)) interacts with NAD(+). Substrate contacts are provided by arginine 96, arginine 106, arginine 134, and aspartate 224. Mg(2+) is bound by residues aspartate 224, aspartate 248, and aspartate 252. Residue 282-294 (GSAPDIAGLGIAN) participates in NAD(+) binding.

Belongs to the isocitrate and isopropylmalate dehydrogenases family. LeuB type 1 subfamily. As to quaternary structure, homodimer. Requires Mg(2+) as cofactor. Mn(2+) serves as cofactor.

Its subcellular location is the cytoplasm. It carries out the reaction (2R,3S)-3-isopropylmalate + NAD(+) = 4-methyl-2-oxopentanoate + CO2 + NADH. Its pathway is amino-acid biosynthesis; L-leucine biosynthesis; L-leucine from 3-methyl-2-oxobutanoate: step 3/4. Functionally, catalyzes the oxidation of 3-carboxy-2-hydroxy-4-methylpentanoate (3-isopropylmalate) to 3-carboxy-4-methyl-2-oxopentanoate. The product decarboxylates to 4-methyl-2 oxopentanoate. This chain is 3-isopropylmalate dehydrogenase, found in Pseudomonas putida (strain ATCC 47054 / DSM 6125 / CFBP 8728 / NCIMB 11950 / KT2440).